Consider the following 324-residue polypeptide: Adenosine kinase (324 aa).

Residues S8, D12, S36, G48, N52, F102, F116, and 172 to 173 each bind substrate; that span reads QQ. ATP is bound by residues N195, 223–228, and G256; that span reads TLGPKG. A substrate-binding site is contributed by D257. Residue D257 is the Proton acceptor of the active site.

It belongs to the carbohydrate kinase PfkB family. In terms of assembly, homodimer. Mg(2+) serves as cofactor.

The catalysed reaction is adenosine + ATP = AMP + ADP + H(+). The enzyme catalyses adenosine + GTP = GDP + AMP + H(+). It carries out the reaction dGTP + adenosine = dGDP + AMP + H(+). It functions in the pathway purine metabolism; AMP biosynthesis via salvage pathway; AMP from adenosine: step 1/1. In terms of biological role, catalyzes the phosphorylation of adenosine to adenosine monophosphate (AMP). Prefers dGTP and GTP to ATP as phosphate donors in vitro. The sequence is that of Adenosine kinase (adoK) from Mycobacterium bovis (strain ATCC BAA-935 / AF2122/97).